Consider the following 622-residue polypeptide: Golgin subfamily A member 6-like protein 7 (622 aa).

Disordered regions lie at residues 1–82 (MMSE…QQAL), 251–496 (RKHE…RKQV), and 511–580 (EKMQ…HDNR). Basic and acidic residues-rich tracts occupy residues 57–74 (SPED…ENKA), 251–275 (RKHE…REQE), 283–332 (EQMR…KQEE), 339–367 (EQMR…KQEE), 374–388 (EQMR…KQEE), and 395–420 (EQMR…KQEE). Positions 100–534 (KTELETALHD…EKRREKKERM (435 aa)) form a coiled coil. The segment covering 477 to 489 (QMGEQEEQMGEQE) has biased composition (acidic residues). Composition is skewed to basic and acidic residues over residues 511–546 (EKMQ…ERCS) and 567–580 (PARE…HDNR).

The protein belongs to the GOLGA6 family.

The chain is Golgin subfamily A member 6-like protein 7 from Homo sapiens (Human).